The sequence spans 254 residues: Adenosylcobinamide-GDP ribazoletransferase (254 aa).

7 consecutive transmembrane segments (helical) span residues 27 to 47 (SSLY…VLLA), 50 to 70 (GMGV…GLIL), 104 to 124 (VGSF…ICLL), 131 to 151 (AYGM…LLAA), 170 to 190 (AGWP…FVLL), 194 to 214 (LAPS…VGWL), and 233 to 253 (LVEA…FWAI).

It belongs to the CobS family. The cofactor is Mg(2+).

It localises to the cell inner membrane. It catalyses the reaction alpha-ribazole + adenosylcob(III)inamide-GDP = adenosylcob(III)alamin + GMP + H(+). It carries out the reaction alpha-ribazole 5'-phosphate + adenosylcob(III)inamide-GDP = adenosylcob(III)alamin 5'-phosphate + GMP + H(+). It participates in cofactor biosynthesis; adenosylcobalamin biosynthesis; adenosylcobalamin from cob(II)yrinate a,c-diamide: step 7/7. Its function is as follows. Joins adenosylcobinamide-GDP and alpha-ribazole to generate adenosylcobalamin (Ado-cobalamin). Also synthesizes adenosylcobalamin 5'-phosphate from adenosylcobinamide-GDP and alpha-ribazole 5'-phosphate. This is Adenosylcobinamide-GDP ribazoletransferase from Chlorobaculum tepidum (strain ATCC 49652 / DSM 12025 / NBRC 103806 / TLS) (Chlorobium tepidum).